Reading from the N-terminus, the 121-residue chain is Protein VraC (121 aa).

The protein is Protein VraC (vraC) of Staphylococcus aureus (strain Mu3 / ATCC 700698).